A 494-amino-acid polypeptide reads, in one-letter code: UPF0371 protein SPy_1343/M5005_Spy1095 (494 aa).

The protein belongs to the UPF0371 family.

The chain is UPF0371 protein SPy_1343/M5005_Spy1095 from Streptococcus pyogenes serotype M1.